Here is a 517-residue protein sequence, read N- to C-terminus: 6-phosphogluconate dehydrogenase, decarboxylating (517 aa).

Residues 35-40 (GLAVMG), 58-60 (NRT), 100-102 (VKA), and asparagine 128 contribute to the NADP(+) site. Residues asparagine 128 and 154 to 156 (SGG) contribute to the substrate site. Lysine 208 serves as the catalytic Proton acceptor. Residue 211–212 (HN) coordinates substrate. Catalysis depends on glutamate 215, which acts as the Proton donor. 5 residues coordinate substrate: tyrosine 216, lysine 286, arginine 313, arginine 474, and histidine 480.

This sequence belongs to the 6-phosphogluconate dehydrogenase family. In terms of assembly, homodimer.

The catalysed reaction is 6-phospho-D-gluconate + NADP(+) = D-ribulose 5-phosphate + CO2 + NADPH. It functions in the pathway carbohydrate degradation; pentose phosphate pathway; D-ribulose 5-phosphate from D-glucose 6-phosphate (oxidative stage): step 3/3. Catalyzes the oxidative decarboxylation of 6-phosphogluconate to ribulose 5-phosphate and CO(2), with concomitant reduction of NADP to NADPH. The sequence is that of 6-phosphogluconate dehydrogenase, decarboxylating (DOR14) from Candida albicans (Yeast).